A 172-amino-acid polypeptide reads, in one-letter code: Adenine phosphoribosyltransferase (172 aa).

This sequence belongs to the purine/pyrimidine phosphoribosyltransferase family. As to quaternary structure, homodimer.

The protein localises to the cytoplasm. The catalysed reaction is AMP + diphosphate = 5-phospho-alpha-D-ribose 1-diphosphate + adenine. Its pathway is purine metabolism; AMP biosynthesis via salvage pathway; AMP from adenine: step 1/1. Functionally, catalyzes a salvage reaction resulting in the formation of AMP, that is energically less costly than de novo synthesis. The protein is Adenine phosphoribosyltransferase of Nostoc punctiforme (strain ATCC 29133 / PCC 73102).